Here is a 193-residue protein sequence, read N- to C-terminus: UPF0301 protein SCO2948 (193 aa).

It belongs to the UPF0301 (AlgH) family.

This chain is UPF0301 protein SCO2948, found in Streptomyces coelicolor (strain ATCC BAA-471 / A3(2) / M145).